A 141-amino-acid polypeptide reads, in one-letter code: Large ribosomal subunit protein uL11 (141 aa).

The protein belongs to the universal ribosomal protein uL11 family. In terms of assembly, part of the ribosomal stalk of the 50S ribosomal subunit. Interacts with L10 and the large rRNA to form the base of the stalk. L10 forms an elongated spine to which L12 dimers bind in a sequential fashion forming a multimeric L10(L12)X complex. In terms of processing, one or more lysine residues are methylated.

In terms of biological role, forms part of the ribosomal stalk which helps the ribosome interact with GTP-bound translation factors. The sequence is that of Large ribosomal subunit protein uL11 from Ruegeria pomeroyi (strain ATCC 700808 / DSM 15171 / DSS-3) (Silicibacter pomeroyi).